A 188-amino-acid polypeptide reads, in one-letter code: MRVIASSIRKGNVIEQDGKLYVVLTAENIHPGKGTPVSQIEMRRISDGVKISERYKTTDQVEKATIEDSNFTFLYEDADGFHFMNPESFDQVQVPKEVVGNAAPYLAENMSVKLSMHDTTPVAIQLPQRATLEVVDTEPVTKGQTASSSYKPAMLSNGVRTAVPPHIGVGTRIVVMTEDGSYVERAKD.

Belongs to the elongation factor P family.

The protein localises to the cytoplasm. It participates in protein biosynthesis; polypeptide chain elongation. Functionally, involved in peptide bond synthesis. Stimulates efficient translation and peptide-bond synthesis on native or reconstituted 70S ribosomes in vitro. Probably functions indirectly by altering the affinity of the ribosome for aminoacyl-tRNA, thus increasing their reactivity as acceptors for peptidyl transferase. The polypeptide is Elongation factor P (Rhodopseudomonas palustris (strain BisA53)).